The following is a 221-amino-acid chain: Small ribosomal subunit protein uS2 (221 aa).

The protein belongs to the universal ribosomal protein uS2 family.

The polypeptide is Small ribosomal subunit protein uS2 (Methanococcus maripaludis (strain C6 / ATCC BAA-1332)).